Reading from the N-terminus, the 1137-residue chain is Voltage-dependent calcium channel subunit alpha-2/delta-4 (1137 aa).

The N-terminal stretch at 1–19 is a signal peptide; it reads MVCGCSALLPLPNPRPTMP. The Extracellular segment spans residues 20–1115; sequence ATPNFLANPS…AQDCGGASDT (1096 aa). A glycan (N-linked (GlcNAc...) asparagine) is linked at Asn201. Residues 291–473 enclose the VWFA domain; sequence DIVILVDVSG…ENVMEYLHVL (183 aa). Positions 297, 299, and 301 each coordinate a divalent metal cation. Residues 297-301 carry the MIDAS-like motif motif; that stretch reads DVSGS. A disulfide bridge connects residues Cys447 and Cys1097. In terms of domain architecture, Cache spans 487–580; sequence WTEAYMDSKL…RPLYREGKKL (94 aa). An N-linked (GlcNAc...) asparagine glycan is attached at Asn664. A helical transmembrane segment spans residues 1116–1136; the sequence is SASPPLLLLPVCAWGLLPQLL. Residue Arg1137 is a topological domain, cytoplasmic.

Belongs to the calcium channel subunit alpha-2/delta family. Dimer formed of alpha-2-2 and delta-2 chains; disulfide-linked. Voltage-dependent calcium channels are multisubunit complexes, consisting of alpha-1 (CACNA1), alpha-2 (CACNA2D), beta (CACNB) and delta (CACNA2D) subunits in a 1:1:1:1 ratio. Interacts with CACNA1C and CACNB3. In terms of processing, may be proteolytically processed into subunits alpha-2-4 and delta-4 that are disulfide-linked. It is however unclear whether such cleavage really takes place in vivo and has a functional role. Predominantly expressed in certain types of endocrine cells. Present in the Paneth cells of the small intestine. Also present in the erythroblasts in the fetal liver, in the cells of the zona reticularis of the adrenal gland and in the basophils of the pituitary. Present at low level in some brain regions such as the cerebellum (at protein level).

The protein resides in the membrane. Functionally, the alpha-2/delta subunit of voltage-dependent calcium channels regulates calcium current density and activation/inactivation kinetics of the calcium channel. The chain is Voltage-dependent calcium channel subunit alpha-2/delta-4 (CACNA2D4) from Homo sapiens (Human).